We begin with the raw amino-acid sequence, 64 residues long: Drosocin antimicrobial peptides (64 aa).

Positions 1 to 19 are cleaved as a signal peptide; the sequence is MKFTIVFLLLACVFAMAVA. A propeptide spanning residues 20–21 is cleaved from the precursor; sequence TP. O-linked (GalNAc...) serine glycosylation occurs at Ser-28. O-linked (GalNAc...) threonine glycosylation is present at Thr-32. Residues 32-40 are critical for inhibition of translation, possibly due to its role in mediating interactions with bacterial 23S rRNA and peptide chain release factors; sequence TSHPRPIRV.

Belongs to the drosocin family. Associates with the bacterial 50S ribosomal complex, occupying the nascent peptide exit tunnel. Interacts with bacterial 23S rRNA; this interaction is direct. Interacts with bacterial rplV/50S ribosomal protein L22; this interaction is direct. Interacts with bacterial prfA/peptide chain release factor RF1; while associated with the bacterial 50S ribosomal complex, this interaction is direct and traps RF1 on the ribosome, inhibiting further translation. In terms of processing, proteolytically cleaved at a pair of basic residues corresponding to the RXK/RR optimal cleavage site for furin proteases to produce two distinct antibacterial peptides. O-glycosylated. O-glycosylation may be required for efficient uptake by target bacterial cells. Monosaccharide modification of Thr-32 provides better antibacterial activity than disaccharide modification or no modification. O-glycosylation of Thr-32 is not essential for antimicrobial activity but enhances this activity by mediating interactions with the 23S rRNA and increasing the efficiency of translation inhibition.

The protein localises to the secreted. Functionally, antibacterial peptide with strong anti-Gram-negative bacteria activity. Significantly contributes to antibacterial activity against Enterobacter cloacae but not Providencia burhodogranariea. Inhibitor of bacterial translation machinery that targets translation termination in a prfA- or prfB-dependent manner. Binds within the nascent peptide exit tunnel of the bacterial large ribosomal subunit, potentially interfering with nascent chain translocation that occurs post-peptide bond formation. Binds prfA/RF1 (and potentially prfB/RF2), trapping it on the ribosome after release of the nascent polypeptide chain and preventing further translation. The resulting depletion of peptide chain release factors further disrupts bacterial translation by preventing ribosomal peptide chain release and inducing stop codon readthrough. Entry into target Escherichia coli cells requires the bacterial peptide antibiotic transporter sbmA. In terms of biological role, peptide with significant antibacterial activity against Providencia burhodogranariea but not Enterobacter cloacae. The protein is Drosocin antimicrobial peptides (Dro) of Drosophila simulans (Fruit fly).